We begin with the raw amino-acid sequence, 129 residues long: Follitropin subunit beta (129 aa).

The N-terminal stretch at Met-1–Arg-19 is a signal peptide. Disulfide bonds link Cys-21–Cys-69, Cys-35–Cys-84, Cys-38–Cys-122, Cys-46–Cys-100, Cys-50–Cys-102, and Cys-105–Cys-112. N-linked (GlcNAc...) asparagine glycans are attached at residues Asn-25 and Asn-42.

It belongs to the glycoprotein hormones subunit beta family. In terms of assembly, heterodimer. The active follitropin is a heterodimer composed of an alpha chain/CGA shared with other hormones and a unique beta chain/FSHB shown here.

Its subcellular location is the secreted. Its function is as follows. Together with the alpha chain CGA constitutes follitropin, the follicle-stimulating hormone, and provides its biological specificity to the hormone heterodimer. Binds FSHR, a G protein-coupled receptor, on target cells to activate downstream signaling pathways. Follitropin is involved in follicle development and spermatogenesis in reproductive organs. This chain is Follitropin subunit beta (FSHB), found in Ovis aries (Sheep).